The primary structure comprises 543 residues: Carboxypeptidase Y homolog A (543 aa).

Positions 1–17 (MKLLTTGLLASAALVAA) are cleaved as a signal peptide. Positions 18 to 124 (QEQQVLRADE…KLKNYDLRVK (107 aa)) are excised as a propeptide. Disulfide bonds link Cys179-Cys419, Cys313-Cys327, Cys337-Cys360, Cys344-Cys353, and Cys382-Cys389. Asn210 carries N-linked (GlcNAc...) asparagine glycosylation. Ser266 is an active-site residue. Asp458 is a catalytic residue. An N-linked (GlcNAc...) asparagine glycan is attached at Asn509. His520 is a catalytic residue.

The protein belongs to the peptidase S10 family.

It is found in the vacuole. It carries out the reaction Release of a C-terminal amino acid with broad specificity.. In terms of biological role, vacuolar carboxypeptidase involved in degradation of small peptides. Digests preferentially peptides containing an aliphatic or hydrophobic residue in P1' position, as well as methionine, leucine or phenylalanine in P1 position of ester substrate. In Arthroderma gypseum (strain ATCC MYA-4604 / CBS 118893) (Microsporum gypseum), this protein is Carboxypeptidase Y homolog A (CPYA).